A 259-amino-acid polypeptide reads, in one-letter code: 3-deoxy-manno-octulosonate cytidylyltransferase (259 aa).

It belongs to the KdsB family.

Its subcellular location is the cytoplasm. It catalyses the reaction 3-deoxy-alpha-D-manno-oct-2-ulosonate + CTP = CMP-3-deoxy-beta-D-manno-octulosonate + diphosphate. Its pathway is nucleotide-sugar biosynthesis; CMP-3-deoxy-D-manno-octulosonate biosynthesis; CMP-3-deoxy-D-manno-octulosonate from 3-deoxy-D-manno-octulosonate and CTP: step 1/1. It participates in bacterial outer membrane biogenesis; lipopolysaccharide biosynthesis. Its function is as follows. Activates KDO (a required 8-carbon sugar) for incorporation into bacterial lipopolysaccharide in Gram-negative bacteria. This chain is 3-deoxy-manno-octulosonate cytidylyltransferase, found in Alkalilimnicola ehrlichii (strain ATCC BAA-1101 / DSM 17681 / MLHE-1).